A 720-amino-acid polypeptide reads, in one-letter code: Glutaryl-7-aminocephalosporanic-acid acylase (720 aa).

The N-terminal stretch at 1–29 (MLRVLHRAASALVMATVIGLAPAVAFALA) is a signal peptide. Positions 190–198 (DPPDLADQG) are cleaved as a propeptide — spacer peptide. Catalysis depends on S199, which acts as the Nucleophile. Catalysis depends on residues H221 and E653.

The protein belongs to the peptidase S45 family. Heterotetramer of two alpha and two beta subunits processed from the same precursor.

It is found in the periplasm. The catalysed reaction is (7R)-7-(4-carboxybutanamido)cephalosporanate + H2O = (7R)-7-aminocephalosporanate + glutarate. Catalyzes the deacylation of 7 beta-(4-carboxybutanamido)cephalosporanic acid (glutaryl-7-aminocephalosporanic acid or GL-7-ACA) to 7-aminocephalosporanic acid (7-ACA). The polypeptide is Glutaryl-7-aminocephalosporanic-acid acylase (Pseudomonas sp. (strain SY-77)).